The primary structure comprises 1196 residues: DNA-directed RNA polymerase subunit beta (1196 aa).

This sequence belongs to the RNA polymerase beta chain family. The RNAP catalytic core consists of 2 alpha, 1 beta, 1 beta' and 1 omega subunit. When a sigma factor is associated with the core the holoenzyme is formed, which can initiate transcription.

The catalysed reaction is RNA(n) + a ribonucleoside 5'-triphosphate = RNA(n+1) + diphosphate. Its function is as follows. DNA-dependent RNA polymerase catalyzes the transcription of DNA into RNA using the four ribonucleoside triphosphates as substrates. In Lactococcus lactis subsp. lactis (strain IL1403) (Streptococcus lactis), this protein is DNA-directed RNA polymerase subunit beta.